Here is a 346-residue protein sequence, read N- to C-terminus: Protein NDL1 (346 aa).

This sequence belongs to the NDRG family. In terms of assembly, interacts with GB1. Interacts with the heterodimers formed by GB1 and GG1, or GB1 and GG2. Interacts with RGS1. As to expression, expressed in root vasculature, cotyledons, leaves, petals, mature stamens and pollen grains.

Its subcellular location is the cytoplasm. Interacts with the heterotrimeric G protein beta subunit GB1 and plays an significant role in GB1-dependent regulation of lateral root formation. Involved in a signaling pathway that modulates root auxin transport and auxin gradients. Acts partially by positively regulating the auxin carrier PIN2 and AUX1. Acts, together with GB1 as positive regulator of meristem initiation and branching. GB1 and NDL1 positively regulate basipetal inflorescence auxin transport and modulate MAX2 expression in shoots, which regulates organ and lateral meristem formation by the establishment and maintenance of auxin gradients. The polypeptide is Protein NDL1 (Arabidopsis thaliana (Mouse-ear cress)).